The following is a 391-amino-acid chain: GTPase Obg (391 aa).

One can recognise an Obg domain in the interval 1 to 159 (MKFIDEALIR…RDLLLELMLL (159 aa)). In terms of domain architecture, OBG-type G spans 160–333 (ADVGMLGLPN…LTRDIMDFIE (174 aa)). Residues 166–173 (GLPNAGKS), 191–195 (FTTLV), 213–216 (DIPG), 283–286 (NKID), and 314–316 (SAA) each bind GTP. Residues Ser173 and Thr193 each contribute to the Mg(2+) site.

It belongs to the TRAFAC class OBG-HflX-like GTPase superfamily. OBG GTPase family. In terms of assembly, monomer. Requires Mg(2+) as cofactor.

Its subcellular location is the cytoplasm. An essential GTPase which binds GTP, GDP and possibly (p)ppGpp with moderate affinity, with high nucleotide exchange rates and a fairly low GTP hydrolysis rate. Plays a role in control of the cell cycle, stress response, ribosome biogenesis and in those bacteria that undergo differentiation, in morphogenesis control. The chain is GTPase Obg from Haemophilus ducreyi (strain 35000HP / ATCC 700724).